A 329-amino-acid chain; its full sequence is DNA-directed RNA polymerase subunit alpha (329 aa).

Residues 1–235 (MQGSVIEFLK…EQLDAFVDLR (235 aa)) form an alpha N-terminal domain (alpha-NTD) region. Positions 249–329 (FDPILLRPVD…NWPPASIAED (81 aa)) are alpha C-terminal domain (alpha-CTD).

The protein belongs to the RNA polymerase alpha chain family. In terms of assembly, homodimer. The RNAP catalytic core consists of 2 alpha, 1 beta, 1 beta' and 1 omega subunit. When a sigma factor is associated with the core the holoenzyme is formed, which can initiate transcription.

The catalysed reaction is RNA(n) + a ribonucleoside 5'-triphosphate = RNA(n+1) + diphosphate. Functionally, DNA-dependent RNA polymerase catalyzes the transcription of DNA into RNA using the four ribonucleoside triphosphates as substrates. In Haemophilus ducreyi (strain 35000HP / ATCC 700724), this protein is DNA-directed RNA polymerase subunit alpha.